The chain runs to 313 residues: Lactamase-like protein nscB (313 aa).

Residues histidine 97, histidine 99, aspartate 101, and histidine 102 each coordinate Zn(2+). The active-site Proton donor/acceptor is the aspartate 101.

The protein belongs to the metallo-beta-lactamase superfamily. Zn(2+) is required as a cofactor.

Its pathway is secondary metabolite biosynthesis. In terms of biological role, lactamase-like protein; part of the gene cluster that mediates the biosynthesis of neosartoricin B, a prenylated anthracenone that probably exhibits T-cell antiproliferative activity, suggestive of a physiological role as an immunosuppressive agent. The non-reducing polyketide synthase nscA probably synthesizes and cyclizes the decaketide backbone. The hydrolase nscB then mediates the product release through hydrolysis followed by spontaneous decarboxylation. The prenyltransferase nscD catalyzes the addition of the dimethylallyl group to the aromatic C5. The FAD-dependent monooxygenase nscC is then responsible for the stereospecific hydroxylation at C2. Neosartoricin B can be converted into two additional compounds neosartoricins C and D. Neosartoricin C is a spirocyclic compound that is cyclized through the attack of C3 hydroxyl on C14, followed by dehydration. On the other hand, neosartoricin D is a further cyclized compound in which attack of C2 on C14 in neosartoricin C results in the formation of the acetal-containing dioxabicyclo-octanone ring. Both of these compounds are novel and possibly represent related metabolites of the gene cluster. The polypeptide is Lactamase-like protein nscB (Arthroderma gypseum (strain ATCC MYA-4604 / CBS 118893) (Microsporum gypseum)).